The sequence spans 161 residues: Small ribosomal subunit protein uS9 (161 aa).

A compositionally biased stretch (polar residues) spans 1–21 (MATLQSLADLNRANTQTSNPE). The disordered stretch occupies residues 1 to 25 (MATLQSLADLNRANTQTSNPENEAP).

It belongs to the universal ribosomal protein uS9 family.

The protein is Small ribosomal subunit protein uS9 of Methylorubrum populi (strain ATCC BAA-705 / NCIMB 13946 / BJ001) (Methylobacterium populi).